Here is a 224-residue protein sequence, read N- to C-terminus: Golgi to ER traffic protein 1 (224 aa).

The Lumenal segment spans residues 1–33 (MDEAIIVDAEFVAPVGTTAGEFVPIDRAPAAGL). A helical membrane pass occupies residues 34-53 (LLLVAFVVLYAKVISKLGKP). The Cytoplasmic portion of the chain corresponds to 54-137 (AIQEFLWEII…RFFTIISSAI (84 aa)). Residues 102-124 (AKLDREYGKLKVEIEDINNLLTA) are a coiled coil. Residues 138-158 (FLSTTGMKMFLRIKHRKAAIF) form a helical membrane-spanning segment. The Lumenal portion of the chain corresponds to 159–182 (WLPKNAFPYPIEYILSFSSAPLGS). The helical transmembrane segment at 183–199 (VSVSAWLMICDAAMDLI) threads the bilayer. Over 200–224 (VTIFVALVVGVIGMLRSNKVKPKTA) the chain is Cytoplasmic.

It belongs to the WRB/GET1 family. As to quaternary structure, component of the Golgi to ER traffic (GET) complex, which is composed of GET1, GET2 and GET3. Within the complex, GET1 and GET2 form a heterotetramer which is stabilized by phosphatidylinositol binding and which binds to the GET3 homodimer.

The protein localises to the endoplasmic reticulum membrane. It is found in the golgi apparatus membrane. In terms of biological role, required for the post-translational delivery of tail-anchored (TA) proteins to the endoplasmic reticulum. Together with GET2, acts as a membrane receptor for soluble GET3, which recognizes and selectively binds the transmembrane domain of TA proteins in the cytosol. The GET complex cooperates with the HDEL receptor ERD2 to mediate the ATP-dependent retrieval of resident ER proteins that contain a C-terminal H-D-E-L retention signal from the Golgi to the ER. This is Golgi to ER traffic protein 1 from Yarrowia lipolytica (strain CLIB 122 / E 150) (Yeast).